The primary structure comprises 491 residues: F-box/LRR-repeat protein 7 (491 aa).

Residues 1 to 79 (MGANNGKQYG…GRGSSTSSSS (79 aa)) are disordered. The span at 10–26 (GSEGKGSSSISSDVSSS) shows a compositional bias: low complexity. The span at 27–55 (TDHTPTKAQKNVATSEDSDLSMRTLSTPS) shows a compositional bias: polar residues. Residues 111–157 (QASIDRLPDHSMVQIFSFLPTNQLCRCARVCRRWYNLAWDPRLWRTI) enclose the F-box domain. 11 LRR repeats span residues 170–195 (LKVLTRRLCQDTPNVCLMLETVTVSG), 196–221 (CRRLTDRGLYTIAQCCPELRRLEVSG), 222–247 (CYNISNEAVFDVVSLCPNLEHLDVSG), 253–281 (CISLTREASIKLSPLHGKQISIRYLDMTD), 282–307 (CFVLEDEGLHTIAAHCTQLTHLYLRR), 308–333 (CVRLTDEGLRYLVIYCASIKELSVSD), 334–359 (CRFVSDFGLREIAKLESRLRYLSIAH), 360–385 (CGRVTDVGIRYVAKYCSKLRYLNARG), 386–411 (CEGITDHGVEYLAKNCTKLKSLDIGK), 412–437 (CPLVSDTGLECLALNCFNLKRLSLKS), and 438–463 (CESITGQGLQIVAANCFDLQTLNVQD).

This sequence belongs to the FBXL7 family. In terms of assembly, part of the SCF (SKP1-CUL1-F-box) E3 ubiquitin-protein ligase complex SCF(FBXL7) composed of CUL1, SKP1, RBX1 and FBXL7. Interacts with AURKA; interaction takes place during mitosis but not in interphase. Interacts with BIRC5; this interaction allows BIRC5 to be polyubiquitinated by the SCF(FBXL7) E3 ubiquitin-protein ligase complex.

Its subcellular location is the cytoplasm. The protein resides in the cytoskeleton. The protein localises to the microtubule organizing center. It localises to the centrosome. It participates in protein modification; protein ubiquitination. Its function is as follows. Substrate recognition component of a SCF (SKP1-CUL1-F-box protein) E3 ubiquitin-protein ligase complex. During mitosis, it mediates the ubiquitination and subsequent proteasomal degradation of AURKA, causing mitotic arrest. It also regulates mitochondrial function by mediating the ubiquitination and proteasomal degradation of the apoptosis inhibitor BIRC5. The chain is F-box/LRR-repeat protein 7 (FBXL7) from Homo sapiens (Human).